The chain runs to 187 residues: Elongation factor P (187 aa).

The protein belongs to the elongation factor P family.

The protein resides in the cytoplasm. It participates in protein biosynthesis; polypeptide chain elongation. In terms of biological role, involved in peptide bond synthesis. Stimulates efficient translation and peptide-bond synthesis on native or reconstituted 70S ribosomes in vitro. Probably functions indirectly by altering the affinity of the ribosome for aminoacyl-tRNA, thus increasing their reactivity as acceptors for peptidyl transferase. The chain is Elongation factor P from Rhizorhabdus wittichii (strain DSM 6014 / CCUG 31198 / JCM 15750 / NBRC 105917 / EY 4224 / RW1) (Sphingomonas wittichii).